We begin with the raw amino-acid sequence, 150 residues long: Geranyl diphosphate phosphohydrolase (150 aa).

One can recognise a Nudix hydrolase domain in the interval 14–147 (SIKVAVVVCL…DNVVQDGFNP (134 aa)). The short motif at 48-69 (GHLEFGESFEECAARELKEETD) is the Nudix box element. Mg(2+)-binding residues include E63 and E67.

Belongs to the Nudix hydrolase family. In terms of tissue distribution, expressed in petals. Little or no expression in stamens, sepals or young leaves.

Its subcellular location is the cytoplasm. It catalyses the reaction (2E)-geranyl diphosphate + H2O = (2E)-geranyl phosphate + phosphate + H(+). Involved in a cytosolic pathway for the biosynthesis of free monoterpene alcohols that contribute to fragrance. Lacks terpene synthase activity, but has a diphosphohydrolase activity with geranyl diphosphate and farnesyl diphosphate as substrates. No activity with 8-oxo-dGTP and dGTP and unable to dephosphorylate geranyl phosphate to geraniol. The chain is Geranyl diphosphate phosphohydrolase from Rosa hybrid cultivar.